Consider the following 336-residue polypeptide: Alcohol dehydrogenase (336 aa).

Residues Cys37, His58, Cys89, Cys92, Cys95, Cys103, and Cys145 each coordinate Zn(2+).

This sequence belongs to the zinc-containing alcohol dehydrogenase family. It depends on Zn(2+) as a cofactor.

It catalyses the reaction a primary alcohol + NAD(+) = an aldehyde + NADH + H(+). The catalysed reaction is a secondary alcohol + NAD(+) = a ketone + NADH + H(+). This Staphylococcus aureus (strain Mu50 / ATCC 700699) protein is Alcohol dehydrogenase (adh).